The sequence spans 85 residues: uncharacterized protein (85 aa).

Residues 1–19 form the signal peptide; that stretch reads MKTIFTVGAVVLATCLLSG. The N-palmitoyl cysteine moiety is linked to residue C20. The S-diacylglycerol cysteine moiety is linked to residue C20.

It is found in the cell outer membrane. This is an uncharacterized protein from Escherichia coli (strain K12).